Consider the following 256-residue polypeptide: Protein RKD4 (256 aa).

In terms of domain architecture, RWP-RK spans 130-216; that stretch reads EKVTVKKKRN…MEEEVKNLEE (87 aa). Residues 190 to 224 adopt a coiled-coil conformation; it reads RKLKSLNSLIKNLKNVGMEEEVKNLEEHRFLIEQE.

It localises to the nucleus. In terms of biological role, putative transcription factor. This Arabidopsis thaliana (Mouse-ear cress) protein is Protein RKD4 (RKD4).